A 69-amino-acid polypeptide reads, in one-letter code: Protein SlyX homolog (69 aa).

The protein belongs to the SlyX family.

This is Protein SlyX homolog from Pseudomonas aeruginosa (strain LESB58).